A 198-amino-acid chain; its full sequence is Ribosomal RNA small subunit methyltransferase G (198 aa).

S-adenosyl-L-methionine is bound by residues G74, F79, 123 to 124 (IQ), and R136.

This sequence belongs to the methyltransferase superfamily. RNA methyltransferase RsmG family.

The protein localises to the cytoplasm. The catalysed reaction is guanosine(527) in 16S rRNA + S-adenosyl-L-methionine = N(7)-methylguanosine(527) in 16S rRNA + S-adenosyl-L-homocysteine. Functionally, specifically methylates the N7 position of guanine in position 527 of 16S rRNA. The polypeptide is Ribosomal RNA small subunit methyltransferase G (Orientia tsutsugamushi (strain Boryong) (Rickettsia tsutsugamushi)).